A 188-amino-acid chain; its full sequence is Elongation factor P (188 aa).

This sequence belongs to the elongation factor P family.

It is found in the cytoplasm. It participates in protein biosynthesis; polypeptide chain elongation. Its function is as follows. Involved in peptide bond synthesis. Stimulates efficient translation and peptide-bond synthesis on native or reconstituted 70S ribosomes in vitro. Probably functions indirectly by altering the affinity of the ribosome for aminoacyl-tRNA, thus increasing their reactivity as acceptors for peptidyl transferase. The sequence is that of Elongation factor P from Rickettsia akari (strain Hartford).